The following is a 356-amino-acid chain: Phospho-2-dehydro-3-deoxyheptonate aldolase, Tyr-sensitive (356 aa).

This sequence belongs to the class-I DAHP synthase family.

The catalysed reaction is D-erythrose 4-phosphate + phosphoenolpyruvate + H2O = 7-phospho-2-dehydro-3-deoxy-D-arabino-heptonate + phosphate. It participates in metabolic intermediate biosynthesis; chorismate biosynthesis; chorismate from D-erythrose 4-phosphate and phosphoenolpyruvate: step 1/7. Functionally, stereospecific condensation of phosphoenolpyruvate (PEP) and D-erythrose-4-phosphate (E4P) giving rise to 3-deoxy-D-arabino-heptulosonate-7-phosphate (DAHP). The sequence is that of Phospho-2-dehydro-3-deoxyheptonate aldolase, Tyr-sensitive (aroF) from Salmonella typhi.